The sequence spans 441 residues: Endothelin receptor type B (441 aa).

The signal sequence occupies residues 1-26; sequence MQPLPSLCGRALVALILACGVAGIQA. Topologically, residues 27-100 are extracellular; the sequence is EEREFPPAGA…GPIEIKETFK (74 aa). The tract at residues 30 to 87 is disordered; it reads EFPPAGATQPLPGTGEMMETPTETSWPGRSNASDPRSSATPQIPRGGRMAGIPPRTPP. The segment covering 41-53 has biased composition (low complexity); sequence PGTGEMMETPTET. Positions 54 to 70 are enriched in polar residues; sequence SWPGRSNASDPRSSATP. A helical transmembrane segment spans residues 101 to 125; that stretch reads YINTVVSCLVFVLGIIGNSTLLRII. The Cytoplasmic portion of the chain corresponds to 126-136; the sequence is YKNKCMRNGPN. A helical membrane pass occupies residues 137-162; the sequence is ILIASLALGDLLHIIIDIPINTYKLL. The Extracellular segment spans residues 163-174; that stretch reads AKDWPFGVEMCK. Residues C173 and C254 are joined by a disulfide bond. Residues 175 to 196 traverse the membrane as a helical segment; that stretch reads LVPFIQKASVGITVLSLCALSI. Over 197-217 the chain is Cytoplasmic; that stretch reads DRYRAVASWSRIKGIGVPKWT. Residues 218 to 242 form a helical membrane-spanning segment; sequence AVEIVLIWVVSVVLAVPEAVGFDII. Topologically, residues 243 to 270 are extracellular; the sequence is TSDHIGNKLRICLLHPTQKTAFMQFYKT. Residues 271–295 form a helical membrane-spanning segment; that stretch reads AKDWWLFSFYFCLPLAITALFYTLM. The Cytoplasmic portion of the chain corresponds to 296 to 323; that stretch reads TCEMLRKKSGMQIALNDHLKQRREVAKT. Residue S304 is modified to Phosphoserine. The helical transmembrane segment at 324–349 threads the bilayer; sequence VFCLVLVFALCWLPLHLSRILKLTLY. The Extracellular portion of the chain corresponds to 350-361; the sequence is DQHDPRRCEFLS. The chain crosses the membrane as a helical span at residues 362 to 388; it reads FLLVLDYIGINMASLNSCINPIALYLV. Residues 389 to 441 are Cytoplasmic-facing; sequence SKRFKNCFKSCLCCWCQSFEEKQSLEEKQSCLKFKANDHGYDNFRSSNKYSSS. S-palmitoyl cysteine attachment occurs at residues C402 and C404. A phosphoserine mark is found at S418, S434, and S435. Y438 carries the post-translational modification Phosphotyrosine. Phosphoserine occurs at positions 439, 440, and 441.

Belongs to the G-protein coupled receptor 1 family. Endothelin receptor subfamily. EDNRB sub-subfamily. Post-translationally, it is not sure whether phosphorylation is on Ser-434 or Ser-435.

It localises to the cell membrane. Non-specific receptor for endothelin 1, 2, and 3. Mediates its action by association with G proteins that activate a phosphatidylinositol-calcium second messenger system. The sequence is that of Endothelin receptor type B (EDNRB) from Bos taurus (Bovine).